Consider the following 550-residue polypeptide: Arginine--tRNA ligase (550 aa).

Positions 122-132 (GNPTGPLHLAH) match the 'HIGH' region motif.

Belongs to the class-I aminoacyl-tRNA synthetase family. Monomer.

The protein resides in the cytoplasm. The enzyme catalyses tRNA(Arg) + L-arginine + ATP = L-arginyl-tRNA(Arg) + AMP + diphosphate. In Tropheryma whipplei (strain TW08/27) (Whipple's bacillus), this protein is Arginine--tRNA ligase.